The sequence spans 77 residues: Acyl carrier protein (77 aa).

The Carrier domain occupies 2–77; sequence ADVLERVTKI…DAVTYIESHL (76 aa). At serine 37 the chain carries O-(pantetheine 4'-phosphoryl)serine.

It belongs to the acyl carrier protein (ACP) family. Post-translationally, 4'-phosphopantetheine is transferred from CoA to a specific serine of apo-ACP by AcpS. This modification is essential for activity because fatty acids are bound in thioester linkage to the sulfhydryl of the prosthetic group.

The protein localises to the cytoplasm. It participates in lipid metabolism; fatty acid biosynthesis. Functionally, carrier of the growing fatty acid chain in fatty acid biosynthesis. This is Acyl carrier protein from Bacillus anthracis (strain A0248).